A 994-amino-acid chain; its full sequence is Alpha-mannosidase F (994 aa).

The first 20 residues, 1-20 (MKNFYYFILILLFFNEVCYS), serve as a signal peptide directing secretion. Zn(2+)-binding residues include histidine 35, aspartate 37, and aspartate 151. Aspartate 151 (nucleophile) is an active-site residue. N-linked (GlcNAc...) asparagine glycans are attached at residues asparagine 247 and asparagine 381. Histidine 392 is a binding site for Zn(2+). N-linked (GlcNAc...) asparagine glycosylation is found at asparagine 554, asparagine 712, and asparagine 932.

It belongs to the glycosyl hydrolase 38 family. Zn(2+) serves as cofactor.

It localises to the secreted. The catalysed reaction is Hydrolysis of terminal, non-reducing alpha-D-mannose residues in alpha-D-mannosides.. The protein is Alpha-mannosidase F (manF) of Dictyostelium discoideum (Social amoeba).